Consider the following 449-residue polypeptide: Hyaluronidase-1 (449 aa).

An N-terminal signal peptide occupies residues 1-23; it reads MYHLWIKCLAAWIFLKRCNGVHA. Intrachain disulfides connect C47–C340 and C211–C227. 3 N-linked (GlcNAc...) asparagine glycosylation sites follow: N67, N103, and N111. E135 serves as the catalytic Proton donor. N-linked (GlcNAc...) asparagine glycosylation is present at N153. N357 is a glycosylation site (N-linked (GlcNAc...) asparagine). Intrachain disulfides connect C365-C376, C370-C427, and C429-C438. An N-linked (GlcNAc...) asparagine glycan is attached at N401. The EGF-like domain maps to 427-438; sequence CQCYQGWKGLYC.

It belongs to the glycosyl hydrolase 56 family. Monomer. Expressed by the venom gland.

It is found in the secreted. It catalyses the reaction Random hydrolysis of (1-&gt;4)-linkages between N-acetyl-beta-D-glucosamine and D-glucuronate residues in hyaluronate.. Snake venom endo-hyaluronidase that degrades hyaluronan to smaller oligosaccharide fragments. In venom, it is not toxic by itself, but increases the diffusion of other venom proteins by degrading the extracellular matrix. In addition, it displays antiedematogenic activity. The polypeptide is Hyaluronidase-1 (Bitis arietans (African puff adder)).